A 431-amino-acid polypeptide reads, in one-letter code: O-methyltransferase gliM (431 aa).

The stretch at 20–85 (EFKAIVNDLR…SMDKLQLQLV (66 aa)) forms a coiled coil. Residues D287 and 319 to 321 (GDF) contribute to the S-adenosyl-L-methionine site. The active-site Proton acceptor is the H338.

Belongs to the class I-like SAM-binding methyltransferase superfamily. Cation-independent O-methyltransferase family. COMT subfamily.

It participates in mycotoxin biosynthesis. O-methyltransferase; part of the gene cluster that mediates the biosynthesis of gliotoxin, a member of the epipolythiodioxopiperazine (ETP) class of toxins characterized by a disulfide bridged cyclic dipeptide. The first step in gliotoxin biosynthesis is the condensation of serine and phenylalanine to form the cyclo-L-phenylalanyl-L-serine diketopiperazine (DKP) by the NRPS gliP. GliP is also able to produce the DKP cyclo-L-tryptophanyl-L-serine, suggesting that the substrate specificity of the first adenylation (A) domain in gliP is sufficiently relaxed to accommodate both L-Phe and L-Trp. The cytochrome P450 monooxygenase gliC has been shown to catalyze the subsequent hydroxylation of the alpha-carbon of L-Phe in cyclo-L-phenylalanyl-L-serine whereas the second cytochrome P450 enzyme, gliF, is presumably involved in the modification of the DKP side chain. The glutathione S-transferase (GST) gliG then forms a bis-glutathionylated biosynthetic intermediate which is responsible for the sulfurization of gliotoxin. This bis-glutathionylated intermediate is subsequently processed by the gamma-glutamyl cyclotransferase gliK to remove both gamma-glutamyl moieties. Subsequent processing via gliI yields a biosynthetic intermediate, which is N-methylated via the N-methyltransferase gliN, before the gliotoxin oxidoreductase gliT-mediated disulfide bridge closure. GliN-mediated amide methylation confers stability to ETP, damping the spontaneous formation of tri- and tetrasulfides. Intracellular dithiol gliotoxin oxidized by gliT is subsequently effluxed by gliA. Gliotoxin contributes to pathogenesis during invasive aspergillosis. In macrophages and neutrophils, gliotoxin showed inhibition of various different cell functions including cytokine production, antigen presentation, phagocytosis, and production of reactive oxygen species. This is O-methyltransferase gliM from Aspergillus fumigatus (strain ATCC MYA-4609 / CBS 101355 / FGSC A1100 / Af293) (Neosartorya fumigata).